We begin with the raw amino-acid sequence, 606 residues long: WD repeat-containing protein 1 (606 aa).

13 WD repeats span residues 4–45 (EIKK…LRNI), 48–87 (PAIADIYTEHAHQVVVAKYAPSGFYIASGDVSGKLRIWDT), 93–135 (LLKY…LWDS), 138–176 (SVGEITGHNKVINSVDIKQSRPYRLVTGSDDNCAAFFEG), 180–218 (KFKFTISDHGRFVNCVRFSPDGNRFATASADGQIFIYDG), 224–263 (VCALGGSKAHDGGIYAISWSPDSTHLLSASGDKTSKIWDV), 270–306 (NTFTMGSNVLDQQLGCLWQKDHLLSISLSGYINYLDK), 311–351 (KPLR…YWDS), 358–408 (SFAG…KLDV), 432–474 (LKDQ…LYSI), 480–518 (KDEGKLLEAKGPVTDLAFSHDGAFLAVCDASKVVTVFSV), 523–561 (SENNVFYGHHAKIVCLAWSPDNEHFASGGMDMMVYVWTL), and 566–604 (TRVKIQDAHRLHHVSSLAWLDEHTLVTTSHDASVKEWTI). Lys-28, Lys-81, Lys-95, and Lys-115 each carry N6-acetyllysine. At Tyr-238 the chain carries Phosphotyrosine. The residue at position 480 (Lys-480) is an N6-acetyllysine.

This sequence belongs to the WD repeat AIP1 family.

Its subcellular location is the cytoplasm. It is found in the cytoskeleton. The protein resides in the cell projection. The protein localises to the podosome. In terms of biological role, induces disassembly of actin filaments in conjunction with ADF/cofilin family proteins. Enhances cofilin-mediated actin severing. Involved in cytokinesis. Involved in chemotactic cell migration by restricting lamellipodial membrane protrusions. Involved in myocardium sarcomere organization. Required for cardiomyocyte growth and maintenance. Involved in megakaryocyte maturation and platelet shedding. Required for the establishment of planar cell polarity (PCP) during follicular epithelium development and for cell shape changes during PCP; the function seems to implicate cooperation with CFL1 and/or DSTN/ADF. Involved in the generation/maintenance of cortical tension. Involved in assembly and maintenance of epithelial apical cell junctions and plays a role in the organization of the perijunctional actomyosin belt. The protein is WD repeat-containing protein 1 (WDR1) of Bos taurus (Bovine).